Consider the following 329-residue polypeptide: tRNA(Ile)-lysidine synthase (329 aa).

37–42 provides a ligand contact to ATP; it reads SGGSDS.

The protein belongs to the tRNA(Ile)-lysidine synthase family.

The protein localises to the cytoplasm. It catalyses the reaction cytidine(34) in tRNA(Ile2) + L-lysine + ATP = lysidine(34) in tRNA(Ile2) + AMP + diphosphate + H(+). In terms of biological role, ligates lysine onto the cytidine present at position 34 of the AUA codon-specific tRNA(Ile) that contains the anticodon CAU, in an ATP-dependent manner. Cytidine is converted to lysidine, thus changing the amino acid specificity of the tRNA from methionine to isoleucine. This chain is tRNA(Ile)-lysidine synthase, found in Zymomonas mobilis subsp. mobilis (strain ATCC 31821 / ZM4 / CP4).